A 1700-amino-acid polypeptide reads, in one-letter code: Balbiani ring protein 3 (1700 aa).

Positions 1–20 (MKTLSSLLLVLAVNVLLIQA) are cleaved as a signal peptide.

Salivary gland.

It localises to the secreted. In terms of biological role, used by the larvae to construct a supramolecular structure, the larval tube. Balbiani ring protein 3 could play a role as a transport protein that binds to other proteins intracellularly and in the gland lumen in order to prevent these from forming water-insoluble fibers too early. The sequence is that of Balbiani ring protein 3 (BR3) from Chironomus tentans (Midge).